The following is a 388-amino-acid chain: P2X purinoceptor 4 (388 aa).

The Cytoplasmic segment spans residues M1–R33. The helical transmembrane segment at A34 to Y54 threads the bilayer. The Extracellular portion of the chain corresponds to Q55–N338. 2 residues coordinate ATP: K67 and K69. 2 residues coordinate CTP: K67 and K69. 2 N-linked (GlcNAc...) asparagine glycosylation sites follow: N75 and N110. 3 disulfide bridges follow: C116–C165, C126–C149, and C132–C159. Residues N153 and N184 are each glycosylated (N-linked (GlcNAc...) asparagine). Positions 186 and 188 each coordinate ATP. CTP is bound at residue T186. N199 and N208 each carry an N-linked (GlcNAc...) asparagine glycan. 2 disulfide bridges follow: C217/C227 and C261/C270. Positions 293, 295, and 313 each coordinate ATP. Residues N293, R295, and K313 each contribute to the CTP site. The chain crosses the membrane as a helical span at residues V339–Y359. The Cytoplasmic portion of the chain corresponds to C360–Q388.

The protein belongs to the P2X receptor family. Functional P2RXs are organized as homomeric and heteromeric trimers. Forms heterotrimer with P2RX1. Interacts with P2RX7 (via C-terminus); this interaction is functional only in the presence of ATP. Forms heterotrimer with P2RX4; functional differences between homomeric P2RX4 and P2RX4/6 heterotrimer are minor. Interacts with AP1M2. In terms of tissue distribution, widespread distribution in the brain. Strongly expressed in microglial cells. Also expressed in epithelial cells.

The protein localises to the cell membrane. It is found in the lysosome membrane. It catalyses the reaction K(+)(in) = K(+)(out). The catalysed reaction is Na(+)(in) = Na(+)(out). It carries out the reaction Ca(2+)(in) = Ca(2+)(out). Its activity is regulated as follows. Activated by ATP. pH-dependent and inhibited by acidic pH. Its function is as follows. ATP-gated nonselective transmembrane cation channel permeable to potassium, sodium and calcium. CTP, but not GTP or UTP, functions as a weak affinity agonist for P2RX4. Activated by extracellularly released ATP, it plays multiple role in immunity and central nervous system physiology. Plays a key role in initial steps of T-cell activation and Ca(2+) microdomain formation. Also participates in basal T-cell activity without TCR/CD3 stimulation. Promotes the differentiation and activation of Th17 cells via expression of retinoic acid-related orphan receptor C/RORC. Upon activation, drives microglia motility via the PI3K/Akt pathway. Could also function as an ATP-gated cation channel of lysosomal membranes. This chain is P2X purinoceptor 4 (P2rx4), found in Rattus norvegicus (Rat).